A 269-amino-acid chain; its full sequence is Tryptophan synthase alpha chain (269 aa).

Catalysis depends on proton acceptor residues Glu-49 and Asp-60.

It belongs to the TrpA family. Tetramer of two alpha and two beta chains.

The enzyme catalyses (1S,2R)-1-C-(indol-3-yl)glycerol 3-phosphate + L-serine = D-glyceraldehyde 3-phosphate + L-tryptophan + H2O. Its pathway is amino-acid biosynthesis; L-tryptophan biosynthesis; L-tryptophan from chorismate: step 5/5. Its function is as follows. The alpha subunit is responsible for the aldol cleavage of indoleglycerol phosphate to indole and glyceraldehyde 3-phosphate. This is Tryptophan synthase alpha chain from Enterobacter sp. (strain 638).